The sequence spans 293 residues: Ribosomal protein L11 methyltransferase (293 aa).

S-adenosyl-L-methionine-binding residues include Thr145, Gly166, Asp188, and Asn230.

The protein belongs to the methyltransferase superfamily. PrmA family.

Its subcellular location is the cytoplasm. It catalyses the reaction L-lysyl-[protein] + 3 S-adenosyl-L-methionine = N(6),N(6),N(6)-trimethyl-L-lysyl-[protein] + 3 S-adenosyl-L-homocysteine + 3 H(+). In terms of biological role, methylates ribosomal protein L11. The protein is Ribosomal protein L11 methyltransferase of Actinobacillus succinogenes (strain ATCC 55618 / DSM 22257 / CCUG 43843 / 130Z).